We begin with the raw amino-acid sequence, 96 residues long: Small ribosomal subunit protein bS6 (96 aa).

Belongs to the bacterial ribosomal protein bS6 family.

In terms of biological role, binds together with bS18 to 16S ribosomal RNA. The chain is Small ribosomal subunit protein bS6 from Streptococcus equi subsp. zooepidemicus (strain MGCS10565).